The primary structure comprises 533 residues: Glucose-6-phosphate isomerase (533 aa).

The active-site Proton donor is the glutamate 341. Catalysis depends on residues histidine 372 and lysine 501.

Belongs to the GPI family.

The protein localises to the cytoplasm. It catalyses the reaction alpha-D-glucose 6-phosphate = beta-D-fructose 6-phosphate. It participates in carbohydrate biosynthesis; gluconeogenesis. Its pathway is carbohydrate degradation; glycolysis; D-glyceraldehyde 3-phosphate and glycerone phosphate from D-glucose: step 2/4. In terms of biological role, catalyzes the reversible isomerization of glucose-6-phosphate to fructose-6-phosphate. The sequence is that of Glucose-6-phosphate isomerase from Cereibacter sphaeroides (strain ATCC 17029 / ATH 2.4.9) (Rhodobacter sphaeroides).